We begin with the raw amino-acid sequence, 1886 residues long: Polyprotein P3 (1886 aa).

3 disordered regions span residues 1-24, 420-466, and 478-529; these read MATR…SGVP, RCDS…MQDD, and RMKK…NQPE. Positions 9–20 are enriched in polar residues; the sequence is VTQTDGSRTATE. The span at 488–498 shows a compositional bias: low complexity; it reads QQALSSQAQEE. The CCHC-type zinc finger occupies 879–896; that stretch reads CKCYICGQEGHYANQCRN. Positions 1215 to 1292 constitute a Peptidase A2 domain; it reads INAIVDTGAT…GLSPGIQMII (78 aa). The For protease activity role is filled by D1220. One can recognise a Reverse transcriptase domain in the interval 1425-1615; it reads LLQMKVIRPS…PEIDFLGASL (191 aa). The 136-residue stretch at 1706-1841 folds into the RNase H type-1 domain; it reads KDSFIIIETD…ADALSRMINF (136 aa). Mg(2+)-binding residues include D1715, E1758, D1784, and D1833.

In terms of processing, polyprotein P3 is presumably proteolytically cleaved into several chains by viral protease.

The catalysed reaction is Endonucleolytic cleavage to 5'-phosphomonoester.. It carries out the reaction DNA(n) + a 2'-deoxyribonucleoside 5'-triphosphate = DNA(n+1) + diphosphate. In terms of biological role, capsid protein self assembles to form a bacilliform capsid about 90-900 nm in length. The capsid encapsulates the genomic dsDNA. Following virus entry into host cell, provides nuclear import of the viral genome. Virus particles do not enter the nucleus, but are targeted to the nuclear membrane through the interaction with host importins. This is Polyprotein P3 from Commelina yellow mottle virus (CoYMV).